The sequence spans 103 residues: Small ribosomal subunit protein uS10 (103 aa).

This sequence belongs to the universal ribosomal protein uS10 family. As to quaternary structure, part of the 30S ribosomal subunit.

Its function is as follows. Involved in the binding of tRNA to the ribosomes. This chain is Small ribosomal subunit protein uS10, found in Escherichia coli O127:H6 (strain E2348/69 / EPEC).